The chain runs to 171 residues: 3-hydroxydecanoyl-[acyl-carrier-protein] dehydratase (171 aa).

Residue His-70 is part of the active site.

This sequence belongs to the thioester dehydratase family. FabA subfamily. In terms of assembly, homodimer.

The protein localises to the cytoplasm. It catalyses the reaction a (3R)-hydroxyacyl-[ACP] = a (2E)-enoyl-[ACP] + H2O. It carries out the reaction (3R)-hydroxydecanoyl-[ACP] = (2E)-decenoyl-[ACP] + H2O. The catalysed reaction is (2E)-decenoyl-[ACP] = (3Z)-decenoyl-[ACP]. It participates in lipid metabolism; fatty acid biosynthesis. Necessary for the introduction of cis unsaturation into fatty acids. Catalyzes the dehydration of (3R)-3-hydroxydecanoyl-ACP to E-(2)-decenoyl-ACP and then its isomerization to Z-(3)-decenoyl-ACP. Can catalyze the dehydratase reaction for beta-hydroxyacyl-ACPs with saturated chain lengths up to 16:0, being most active on intermediate chain length. The polypeptide is 3-hydroxydecanoyl-[acyl-carrier-protein] dehydratase (Shewanella loihica (strain ATCC BAA-1088 / PV-4)).